A 151-amino-acid polypeptide reads, in one-letter code: Large ribosomal subunit protein bL9 (151 aa).

This sequence belongs to the bacterial ribosomal protein bL9 family.

Functionally, binds to the 23S rRNA. In Carboxydothermus hydrogenoformans (strain ATCC BAA-161 / DSM 6008 / Z-2901), this protein is Large ribosomal subunit protein bL9.